Reading from the N-terminus, the 259-residue chain is BTB/POZ domain-containing protein KCTD4 (259 aa).

Positions 1–22 (MEHKINRREKEKDYEGKHNSLE) are disordered. The 102-residue stretch at 33-134 (TLMTLNVGGY…EVKSRWEKEQ (102 aa)) folds into the BTB domain.

In Bos taurus (Bovine), this protein is BTB/POZ domain-containing protein KCTD4 (KCTD4).